A 438-amino-acid polypeptide reads, in one-letter code: Glutaryl-CoA dehydrogenase, mitochondrial (438 aa).

The N-terminal 44 residues, 1–44 (MALRGVSVQLLSRVPGLRVFRTWVSSAAQTEKVGRTQSQLAKSS), are a transit peptide targeting the mitochondrion. Substrate is bound by residues 138-139 (RS) and Ser186. FAD is bound by residues 177–186 (FGLTEPNSGS), Ser186, and 212–214 (WIT). Lys240 bears the N6-acetyllysine mark. 287-294 (FGCLNNGR) serves as a coordination point for substrate. Residues Arg319, Gln330, and 387–391 (DMLGG) contribute to the FAD site. Glu414 acts as the Proton acceptor in catalysis. Gly415 serves as a coordination point for substrate. Residues Thr416, 416–418 (THD), and Phe434 each bind FAD.

Belongs to the acyl-CoA dehydrogenase family. Homotetramer. FAD is required as a cofactor.

Its subcellular location is the mitochondrion matrix. It carries out the reaction glutaryl-CoA + oxidized [electron-transfer flavoprotein] + 2 H(+) = (2E)-butenoyl-CoA + reduced [electron-transfer flavoprotein] + CO2. It functions in the pathway amino-acid metabolism; lysine degradation. Its pathway is amino-acid metabolism; tryptophan metabolism. Catalyzes the oxidative decarboxylation of glutaryl-CoA to crotonyl-CoA and CO(2) in the degradative pathway of L-lysine, L-hydroxylysine, and L-tryptophan metabolism. It uses electron transfer flavoprotein as its electron acceptor. This chain is Glutaryl-CoA dehydrogenase, mitochondrial (GCDH), found in Macaca fascicularis (Crab-eating macaque).